We begin with the raw amino-acid sequence, 1026 residues long: Multidrug resistance protein MdtC (1026 aa).

Residues 1 to 6 are Cytoplasmic-facing; it reads MRFFAL. Residues 7-29 form a helical membrane-spanning segment; sequence FIYRPVATILIAAAITLCGILGF. Topologically, residues 30-335 are periplasmic; that stretch reads RLLPVAPLPQ…TIRASLQEVE (306 aa). Residues 336 to 353 traverse the membrane as a helical segment; the sequence is ETLAISVALVILVVFLFL. The Cytoplasmic portion of the chain corresponds to 354–359; it reads RSGRAT. The helical transmembrane segment at 360–379 threads the bilayer; the sequence is LIPAVAVPVSLIGTFAAMYL. The Periplasmic segment spans residues 380 to 388; that stretch reads CGFSLNNLS. Residues 389–411 form a helical membrane-spanning segment; it reads LMALTIATGFVVDDAIVVLENIA. The Cytoplasmic segment spans residues 412 to 430; the sequence is RHLEARMKPLQAALQGTRE. The chain crosses the membrane as a helical span at residues 431–453; the sequence is VGFTVISMSLSLVAVFLPLLLMG. The Periplasmic portion of the chain corresponds to 454-467; that stretch reads GLPGRLLREFAVTL. The helical transmembrane segment at 468-490 threads the bilayer; that stretch reads SVAIGISLVVSLTLTPMMCGWML. Topologically, residues 491–852 are cytoplasmic; it reads KSSKPRTQPR…QVFQQTMNSQ (362 aa). A helical membrane pass occupies residues 853 to 875; it reads LILIVAAIATVYIVLGILYESYV. Topologically, residues 876–894 are periplasmic; it reads HPLTILSTLPSAGVGALLA. The chain crosses the membrane as a helical span at residues 895-917; that stretch reads LELFNAPFSLIALIGIMLLIGIV. Residues 918–947 lie on the Cytoplasmic side of the membrane; the sequence is KKNAIMMVDFALEAQRSGGLTPEQAIFQAC. Residues 948–970 form a helical membrane-spanning segment; the sequence is LLRFRPIMMTTLAALFGALPLVL. At 971-984 the chain is on the periplasmic side; sequence SGGDGSELRQPLGI. The chain crosses the membrane as a helical span at residues 985–1007; the sequence is TIVGGLVMSQLLTLYTTPVVYLF. Topologically, residues 1008–1026 are cytoplasmic; the sequence is FDRLRLRFSRKNSKPVVEI.

It belongs to the resistance-nodulation-cell division (RND) (TC 2.A.6) family. MdtC subfamily. Part of a tripartite efflux system composed of MdtA, MdtB and MdtC. MdtC forms a heteromultimer with MdtB.

Its subcellular location is the cell inner membrane. This Salmonella typhi protein is Multidrug resistance protein MdtC.